The following is a 339-amino-acid chain: Anthranilate phosphoribosyltransferase (339 aa).

5-phospho-alpha-D-ribose 1-diphosphate-binding positions include Gly-80, 83 to 84 (GD), Thr-88, 90 to 93 (NIST), 108 to 116 (KHGNRSVSS), and Ser-120. Gly-80 serves as a coordination point for anthranilate. A Mg(2+)-binding site is contributed by Ser-92. Asn-111 serves as a coordination point for anthranilate. Arg-166 contacts anthranilate. Asp-225 and Glu-226 together coordinate Mg(2+).

It belongs to the anthranilate phosphoribosyltransferase family. Homodimer. Mg(2+) is required as a cofactor.

The enzyme catalyses N-(5-phospho-beta-D-ribosyl)anthranilate + diphosphate = 5-phospho-alpha-D-ribose 1-diphosphate + anthranilate. It functions in the pathway amino-acid biosynthesis; L-tryptophan biosynthesis; L-tryptophan from chorismate: step 2/5. Catalyzes the transfer of the phosphoribosyl group of 5-phosphorylribose-1-pyrophosphate (PRPP) to anthranilate to yield N-(5'-phosphoribosyl)-anthranilate (PRA). The chain is Anthranilate phosphoribosyltransferase from Moorella thermoacetica (strain ATCC 39073 / JCM 9320).